Reading from the N-terminus, the 171-residue chain is ATP synthase subunit b (171 aa).

The chain crosses the membrane as a helical span at residues 2 to 22 (FLVKMVLGFLIFLSPLCATGL).

This sequence belongs to the ATPase B chain family. F-type ATPases have 2 components, F(1) - the catalytic core - and F(0) - the membrane proton channel. F(1) has five subunits: alpha(3), beta(3), gamma(1), delta(1), epsilon(1). F(0) has three main subunits: a(1), b(2) and c(10-14). The alpha and beta chains form an alternating ring which encloses part of the gamma chain. F(1) is attached to F(0) by a central stalk formed by the gamma and epsilon chains, while a peripheral stalk is formed by the delta and b chains.

The protein resides in the cell inner membrane. In terms of biological role, f(1)F(0) ATP synthase produces ATP from ADP in the presence of a proton or sodium gradient. F-type ATPases consist of two structural domains, F(1) containing the extramembraneous catalytic core and F(0) containing the membrane proton channel, linked together by a central stalk and a peripheral stalk. During catalysis, ATP synthesis in the catalytic domain of F(1) is coupled via a rotary mechanism of the central stalk subunits to proton translocation. Functionally, component of the F(0) channel, it forms part of the peripheral stalk, linking F(1) to F(0). This is ATP synthase subunit b from Helicobacter pylori (strain Shi470).